The sequence spans 338 residues: D-erythrose-4-phosphate dehydrogenase (338 aa).

Residue 11 to 12 (RI) participates in NAD(+) binding. Substrate contacts are provided by residues 153–155 (SCT), Arg-199, 212–213 (TK), and Arg-235. Cys-154 functions as the Nucleophile in the catalytic mechanism. Position 317 (Asn-317) interacts with NAD(+).

The protein belongs to the glyceraldehyde-3-phosphate dehydrogenase family. Epd subfamily. Homotetramer.

Its subcellular location is the cytoplasm. It carries out the reaction D-erythrose 4-phosphate + NAD(+) + H2O = 4-phospho-D-erythronate + NADH + 2 H(+). It participates in cofactor biosynthesis; pyridoxine 5'-phosphate biosynthesis; pyridoxine 5'-phosphate from D-erythrose 4-phosphate: step 1/5. Its function is as follows. Catalyzes the NAD-dependent conversion of D-erythrose 4-phosphate to 4-phosphoerythronate. The sequence is that of D-erythrose-4-phosphate dehydrogenase from Shewanella piezotolerans (strain WP3 / JCM 13877).